The primary structure comprises 282 residues: Pantothenate synthetase (282 aa).

33–40 (MGALHAGH) contacts ATP. His40 functions as the Proton donor in the catalytic mechanism. Gln64 contacts (R)-pantoate. Beta-alanine is bound at residue Gln64. 150 to 153 (GEKD) is a binding site for ATP. Residue Gln156 coordinates (R)-pantoate. Residues Val179 and 187–190 (LSSR) each bind ATP.

This sequence belongs to the pantothenate synthetase family. As to quaternary structure, homodimer.

The protein localises to the cytoplasm. It carries out the reaction (R)-pantoate + beta-alanine + ATP = (R)-pantothenate + AMP + diphosphate + H(+). Its pathway is cofactor biosynthesis; (R)-pantothenate biosynthesis; (R)-pantothenate from (R)-pantoate and beta-alanine: step 1/1. Its function is as follows. Catalyzes the condensation of pantoate with beta-alanine in an ATP-dependent reaction via a pantoyl-adenylate intermediate. This is Pantothenate synthetase from Rhodospirillum rubrum (strain ATCC 11170 / ATH 1.1.1 / DSM 467 / LMG 4362 / NCIMB 8255 / S1).